A 130-amino-acid chain; its full sequence is Probable 4-amino-4-deoxy-L-arabinose-phosphoundecaprenol flippase subunit ArnF (130 aa).

Over 1-4 (MRGY) the chain is Cytoplasmic. Residues 5–25 (AWGAASVLLVTLAQLLMKWGM) traverse the membrane as a helical segment. The Periplasmic portion of the chain corresponds to 26–47 (AQIPLMSFADVTLNLFMQYWLP). Residues 48 to 68 (LVVVSGGIFGYALSMLCWFFA) form a helical membrane-spanning segment. Over 69–77 (LHHLPLNRA) the chain is Cytoplasmic. The chain crosses the membrane as a helical span at residues 78–98 (YPLLSVSYALVYLAAVILPWF). Residue N99 is a topological domain, periplasmic. Residues 100-120 (ESATLLKTLGTLFILFGVWLI) form a helical membrane-spanning segment. Topologically, residues 121–130 (NSQAKVKTPQ) are cytoplasmic.

The protein belongs to the ArnF family. Heterodimer of ArnE and ArnF.

It is found in the cell inner membrane. The protein operates within bacterial outer membrane biogenesis; lipopolysaccharide biosynthesis. Translocates 4-amino-4-deoxy-L-arabinose-phosphoundecaprenol (alpha-L-Ara4N-phosphoundecaprenol) from the cytoplasmic to the periplasmic side of the inner membrane. This Serratia proteamaculans (strain 568) protein is Probable 4-amino-4-deoxy-L-arabinose-phosphoundecaprenol flippase subunit ArnF.